A 229-amino-acid chain; its full sequence is Synaptogyrin-3 (229 aa).

Residue M1 is modified to N-acetylmethionine. The 153-residue stretch at 20-172 (FARRPQTLLR…LTVKALQRFR (153 aa)) folds into the MARVEL domain. The next 4 helical transmembrane spans lie at 30–50 (VASW…GYVN), 70–90 (FGVA…LLDV), 105–125 (VLLD…GFCF), and 148–168 (AVIT…VKAL).

Belongs to the synaptogyrin family. In terms of assembly, interacts (via N-terminus) with SLC6A3 (via N-terminus). May interact with VMAT2.

The protein localises to the cytoplasmic vesicle. It is found in the secretory vesicle. Its subcellular location is the synaptic vesicle membrane. It localises to the synapse. In terms of biological role, may play a role in regulated exocytosis. May indirectly regulate the activity of the plasma membrane dopamine transporter SLC6A3 and thereby regulate dopamine transport back from the synaptic cleft into the presynaptic terminal. The polypeptide is Synaptogyrin-3 (Bos taurus (Bovine)).